The following is a 201-amino-acid chain: Protease (201 aa).

Catalysis depends on residues histidine 55, aspartate 72, and cysteine 122.

Belongs to the peptidase C5 family. Interacts with protease cofactor pVI-C; this interaction is necessary for protease activation.

The protein resides in the virion. Its subcellular location is the host nucleus. It carries out the reaction Cleaves proteins of the adenovirus and its host cell at two consensus sites: -Yaa-Xaa-Gly-Gly-|-Xaa- and -Yaa-Xaa-Gly-Xaa-|-Gly- (in which Yaa is Met, Ile or Leu, and Xaa is any amino acid).. Requires DNA and protease cofactor for maximal activation. Inside nascent virions, becomes partially activated by binding to the viral DNA, allowing it to cleave the cofactor that binds to the protease and fully activates it. Actin, like the viral protease cofactor, seems to act as a cofactor in the cleavage of cytokeratin 18 and of actin itself. Its function is as follows. Cleaves viral precursor proteins (pTP, pIIIa, pVI, pVII, pVIII, and pX) inside newly assembled particles giving rise to mature virions. Protease complexed to its cofactor slides along the viral DNA to specifically locate and cleave the viral precursors. Mature virions have a weakened organization compared to the unmature virions, thereby facilitating subsequent uncoating. Without maturation, the particle lacks infectivity and is unable to uncoat. Late in adenovirus infection, in the cytoplasm, may participate in the cytoskeleton destruction. Cleaves host cell cytoskeletal keratins K7 and K18. The polypeptide is Protease (Ovis aries (Sheep)).